A 315-amino-acid polypeptide reads, in one-letter code: PDZ domain-containing protein GIPC2 (315 aa).

The segment covering methionine 1 to lysine 12 has biased composition (basic residues). The segment at methionine 1–alanine 34 is disordered. Residues glutamate 117–glutamate 197 form the PDZ domain.

Belongs to the GIPC family. In terms of assembly, probably interacts with SEMA5A. As to expression, expressed at highest levels in ascending colon and at moderate levels in adult kidney. Expressed at low levels in adult pancreas and at very low levels in adult liver. Expression is down-regulated in several primary tumors, such as kidney, colon and rectal tumors.

The protein localises to the cytoplasm. The protein is PDZ domain-containing protein GIPC2 (GIPC2) of Homo sapiens (Human).